We begin with the raw amino-acid sequence, 207 residues long: Non-structural protein 5 (207 aa).

Residues 2–69 form the DRBM domain; that stretch reads DPVSVVHSFA…CVLISNDLKE (68 aa).

The polypeptide is Non-structural protein 5 (Segment-12) (Banna virus (BAV)).